Consider the following 217-residue polypeptide: MGYDDTSLANVPPVEDKDLLIPRQKYLLSGVHVGTGIRTKDMEKFIYRVRPDGLCIIDIRKIDERIRTAGKFLARFDPDRVLAVSARIYGFKPVRKFAEYTGAMYITGRILPGTLTNPQAPLHLEPDVVLLSDPRVDRQIHIESVRMGIPVVALVDADNMLENIDLAIPVNNKGRRSLALVYWLLTREVLRNRKVIPPDGDLPEGYEEFATRIMGVR.

The protein belongs to the universal ribosomal protein uS2 family.

This Korarchaeum cryptofilum (strain OPF8) protein is Small ribosomal subunit protein uS2.